Consider the following 299-residue polypeptide: Nucleotide-binding protein RER_30260 (299 aa).

Residue 19 to 26 (GLSGAGLS) coordinates ATP. 70–73 (DVRS) is a GTP binding site.

The protein belongs to the RapZ-like family.

In terms of biological role, displays ATPase and GTPase activities. The protein is Nucleotide-binding protein RER_30260 of Rhodococcus erythropolis (strain PR4 / NBRC 100887).